The sequence spans 309 residues: Uridylate-specific endoribonuclease C (309 aa).

Residues Met-1–Ala-22 form the signal peptide. Residues Val-27–Ser-303 enclose the EndoU domain. N-linked (GlcNAc...) asparagine glycosylation is found at Asn-53 and Asn-121. Residues His-181, His-197, and Lys-242 contribute to the active site.

The protein belongs to the ENDOU family. Monomer. Requires Mn(2+) as cofactor.

The protein localises to the secreted. It catalyses the reaction ribonucleotidyl-uridine-RNA = a 5'-end dephospho-uridine-RNA + a 3'-end 2',3'-cyclophospho-ribonucleotide-RNA. Functionally, endoribonuclease that cleaves single-stranded RNAs at 5' of uridylates and releases a product with a 2',3'-cyclic phosphate at the 3'-end. The UU and GU sites are more efficiently cleaved than CU and AU sites. This Danio rerio (Zebrafish) protein is Uridylate-specific endoribonuclease C (endouc).